The following is a 121-amino-acid chain: Small ribosomal subunit protein bS16 (121 aa).

Basic and acidic residues predominate over residues 85–110; it reads REARNNPKKAEPGKKAQERAAERAAK. Positions 85 to 121 are disordered; it reads REARNNPKKAEPGKKAQERAAERAAKAAEASEAASAE. A compositionally biased stretch (low complexity) spans 111-121; it reads AAEASEAASAE.

The protein belongs to the bacterial ribosomal protein bS16 family.

This is Small ribosomal subunit protein bS16 from Azorhizobium caulinodans (strain ATCC 43989 / DSM 5975 / JCM 20966 / LMG 6465 / NBRC 14845 / NCIMB 13405 / ORS 571).